The sequence spans 421 residues: NADH-quinone oxidoreductase subunit F (421 aa).

The disordered stretch occupies residues 1-25; that stretch reads MLKEEDKIFTNLHGQQSHDLKSSKK. Residues 16 to 25 show a composition bias toward basic and acidic residues; the sequence is QSHDLKSSKK. 54-63 serves as a coordination point for NAD(+); the sequence is GRGGAGFSTG. 166-213 provides a ligand contact to FMN; the sequence is GAGAYICGEETALLESLEGKKGMPRLKPPFPAGFGLYGCPTTINNVES. [4Fe-4S] cluster is bound by residues C344, C347, C350, and C390.

The protein belongs to the complex I 51 kDa subunit family. Requires FMN as cofactor. [4Fe-4S] cluster is required as a cofactor.

It carries out the reaction a quinone + NADH + 5 H(+)(in) = a quinol + NAD(+) + 4 H(+)(out). NDH-1 shuttles electrons from NADH, via FMN and iron-sulfur (Fe-S) centers, to quinones in the respiratory chain. Couples the redox reaction to proton translocation (for every two electrons transferred, four hydrogen ions are translocated across the cytoplasmic membrane), and thus conserves the redox energy in a proton gradient. The polypeptide is NADH-quinone oxidoreductase subunit F (nuoF) (Rickettsia massiliae (strain Mtu5)).